Reading from the N-terminus, the 229-residue chain is Probable bifunctional TENA-E protein (229 aa).

Cysteine 158 and cysteine 173 are oxidised to a cystine.

The protein belongs to the thiaminase-2 family.

It catalyses the reaction 4-amino-5-aminomethyl-2-methylpyrimidine + H2O = 4-amino-5-hydroxymethyl-2-methylpyrimidine + NH4(+). It carries out the reaction N-formyl-4-amino-5-aminomethyl-2-methylpyrimidine + H2O = 4-amino-5-aminomethyl-2-methylpyrimidine + formate. It participates in cofactor biosynthesis; thiamine diphosphate biosynthesis. May be involved in thiamine salvage. The chain is Probable bifunctional TENA-E protein from Glycine max (Soybean).